The following is a 372-amino-acid chain: tRNA-specific 2-thiouridylase MnmA (372 aa).

Residues 16-23 (GMSGGVDS) and M42 contribute to the ATP site. Positions 102 to 104 (NPD) are interaction with target base in tRNA. C107 functions as the Nucleophile in the catalytic mechanism. C107 and C205 are disulfide-bonded. G132 is an ATP binding site. An interaction with tRNA region spans residues 155-157 (KDQ). C205 functions as the Cysteine persulfide intermediate in the catalytic mechanism. Residues 317-318 (RY) are interaction with tRNA.

Belongs to the MnmA/TRMU family.

Its subcellular location is the cytoplasm. The enzyme catalyses S-sulfanyl-L-cysteinyl-[protein] + uridine(34) in tRNA + AH2 + ATP = 2-thiouridine(34) in tRNA + L-cysteinyl-[protein] + A + AMP + diphosphate + H(+). Functionally, catalyzes the 2-thiolation of uridine at the wobble position (U34) of tRNA, leading to the formation of s(2)U34. In Shewanella putrefaciens (strain CN-32 / ATCC BAA-453), this protein is tRNA-specific 2-thiouridylase MnmA.